Here is a 284-residue protein sequence, read N- to C-terminus: Bifunctional protein FolD (284 aa).

NADP(+)-binding positions include Gly166–Ser168, Ser191, and Ile232.

This sequence belongs to the tetrahydrofolate dehydrogenase/cyclohydrolase family. Homodimer.

The enzyme catalyses (6R)-5,10-methylene-5,6,7,8-tetrahydrofolate + NADP(+) = (6R)-5,10-methenyltetrahydrofolate + NADPH. The catalysed reaction is (6R)-5,10-methenyltetrahydrofolate + H2O = (6R)-10-formyltetrahydrofolate + H(+). The protein operates within one-carbon metabolism; tetrahydrofolate interconversion. Its function is as follows. Catalyzes the oxidation of 5,10-methylenetetrahydrofolate to 5,10-methenyltetrahydrofolate and then the hydrolysis of 5,10-methenyltetrahydrofolate to 10-formyltetrahydrofolate. This Neisseria meningitidis serogroup B (strain ATCC BAA-335 / MC58) protein is Bifunctional protein FolD.